Here is a 613-residue protein sequence, read N- to C-terminus: Kelch-like protein 36 (613 aa).

In terms of domain architecture, BTB spans 45–112 (CDVVLVVEEQ…LYSSELELDG (68 aa)). A BACK domain is found at 147 to 249 (YLYLQELASI…PEDILLQRVK (103 aa)). Kelch repeat units follow at residues 294 to 343 (CLLF…VLGG), 344 to 395 (FIFV…SIED), 396 to 442 (MLVA…IYKD), 444 to 491 (VYIS…SLGD), 492 to 544 (SIYS…VWQG), and 545 to 593 (RIYI…VCAL).

As to quaternary structure, interacts with CUL3.

The protein operates within protein modification; protein ubiquitination. In terms of biological role, probable substrate-specific adapter of an E3 ubiquitin-protein ligase complex which mediates the ubiquitination and subsequent proteasomal degradation of target proteins. This Rattus norvegicus (Rat) protein is Kelch-like protein 36 (Klhl36).